Reading from the N-terminus, the 381-residue chain is Dihydroorotate dehydrogenase (quinone) (381 aa).

FMN is bound by residues 74 to 78 (AGFDK) and T98. Residue K78 coordinates substrate. Position 123-127 (123-127 (NRMGF)) interacts with substrate. Residues N152 and N185 each contribute to the FMN site. N185 is a binding site for substrate. Residue S188 is the Nucleophile of the active site. N190 contributes to the substrate binding site. 2 residues coordinate FMN: K223 and T251. 252-253 (NT) lines the substrate pocket. Residues G289, G318, and 339 to 340 (YT) each bind FMN. The segment at 359–381 (RSSPPSPDVTLPPENTPVGQIQA) is disordered.

It belongs to the dihydroorotate dehydrogenase family. Type 2 subfamily. As to quaternary structure, monomer. FMN serves as cofactor.

Its subcellular location is the cell membrane. The catalysed reaction is (S)-dihydroorotate + a quinone = orotate + a quinol. It functions in the pathway pyrimidine metabolism; UMP biosynthesis via de novo pathway; orotate from (S)-dihydroorotate (quinone route): step 1/1. In terms of biological role, catalyzes the conversion of dihydroorotate to orotate with quinone as electron acceptor. The sequence is that of Dihydroorotate dehydrogenase (quinone) from Synechococcus sp. (strain JA-2-3B'a(2-13)) (Cyanobacteria bacterium Yellowstone B-Prime).